A 434-amino-acid chain; its full sequence is DNA primase DnaG (434 aa).

Residues 171 to 250 form the Toprim domain; it reads DAIIIVEGRA…AFSPRRRSVE (80 aa). Residues glutamate 177, aspartate 219, and aspartate 221 each coordinate Mg(2+). Positions 290–319 are disordered; the sequence is GEEEHSSVSQKEEGNNTTPDVPADLPEEPP. Residues 292–303 are compositionally biased toward basic and acidic residues; the sequence is EEHSSVSQKEEG.

The protein belongs to the archaeal DnaG primase family. As to quaternary structure, forms a ternary complex with MCM helicase and DNA. Mg(2+) serves as cofactor.

The enzyme catalyses ssDNA + n NTP = ssDNA/pppN(pN)n-1 hybrid + (n-1) diphosphate.. Its function is as follows. RNA polymerase that catalyzes the synthesis of short RNA molecules used as primers for DNA polymerase during DNA replication. This Methanocorpusculum labreanum (strain ATCC 43576 / DSM 4855 / Z) protein is DNA primase DnaG.